Consider the following 176-residue polypeptide: Ferredoxin-type protein NapF (176 aa).

2 4Fe-4S ferredoxin-type domains span residues 39–68 and 71–100; these read VENSIFVARCTRCGDCLSVCETNILVKGDA and PEVRFDNGECTFCGKCVDACKQPIFYPRDQ. [4Fe-4S] cluster-binding residues include cysteine 48, cysteine 51, cysteine 54, cysteine 58, cysteine 80, cysteine 83, cysteine 86, cysteine 90, cysteine 113, cysteine 121, cysteine 124, cysteine 128, cysteine 152, cysteine 155, cysteine 158, and cysteine 162. 2 4Fe-4S ferredoxin-type domains span residues 119-138 and 143-172; these read IECRTCQDNCPANAIRFKLQ and AQPLVNFDACNGCGACVQGCPVNAITMNDL.

This sequence belongs to the NapF family. In terms of assembly, interacts with the cytoplasmic NapA precursor. It depends on [4Fe-4S] cluster as a cofactor.

The protein localises to the cytoplasm. Functionally, could be involved in the maturation of NapA, the catalytic subunit of the periplasmic nitrate reductase, before its export into the periplasm. This Haemophilus influenzae (strain ATCC 51907 / DSM 11121 / KW20 / Rd) protein is Ferredoxin-type protein NapF.